Reading from the N-terminus, the 429-residue chain is UPF0761 membrane protein ABO_1543 (429 aa).

Helical transmembrane passes span 45 to 65 (LFAI…VPAL), 102 to 122 (LTVL…STVE), 141 to 161 (LLMY…GLAI), 184 to 204 (WLAV…YTVV), 216 to 236 (LGAA…TFFI), and 256 to 278 (LLWI…ALVV).

Belongs to the UPF0761 family.

Its subcellular location is the cell inner membrane. In Alcanivorax borkumensis (strain ATCC 700651 / DSM 11573 / NCIMB 13689 / SK2), this protein is UPF0761 membrane protein ABO_1543.